Reading from the N-terminus, the 280-residue chain is 4-diphosphocytidyl-2-C-methyl-D-erythritol kinase (280 aa).

Lys9 is an active-site residue. 93 to 103 contributes to the ATP binding site; the sequence is PVAAGLGGGSS. The active site involves Asp135.

The protein belongs to the GHMP kinase family. IspE subfamily.

It catalyses the reaction 4-CDP-2-C-methyl-D-erythritol + ATP = 4-CDP-2-C-methyl-D-erythritol 2-phosphate + ADP + H(+). It functions in the pathway isoprenoid biosynthesis; isopentenyl diphosphate biosynthesis via DXP pathway; isopentenyl diphosphate from 1-deoxy-D-xylulose 5-phosphate: step 3/6. Catalyzes the phosphorylation of the position 2 hydroxy group of 4-diphosphocytidyl-2C-methyl-D-erythritol. This Syntrophotalea carbinolica (strain DSM 2380 / NBRC 103641 / GraBd1) (Pelobacter carbinolicus) protein is 4-diphosphocytidyl-2-C-methyl-D-erythritol kinase.